The chain runs to 332 residues: 2-hydroxyacid dehydrogenase homolog 1 (332 aa).

Residues 154–155 (RI), 233–235 (TSR), and Asp259 contribute to the NAD(+) site. Residue Arg235 is part of the active site. The active site involves Glu264. The Proton donor role is filled by His296. Residue 296–299 (HQAF) coordinates NAD(+).

Belongs to the D-isomer specific 2-hydroxyacid dehydrogenase family.

Its subcellular location is the cytoplasm. The protein localises to the nucleus. The chain is 2-hydroxyacid dehydrogenase homolog 1 from Schizosaccharomyces pombe (strain 972 / ATCC 24843) (Fission yeast).